Consider the following 651-residue polypeptide: Chaperone protein HtpG (651 aa).

The a; substrate-binding stretch occupies residues 1-353 (MAAHVEQLEF…AQDMSLNVSR (353 aa)). Residues 354–569 (EILQQDRQIR…TFGITPALAR (216 aa)) form a b region. The segment at 570–651 (MYRASGQPVP…RLTRTVGDQT (82 aa)) is c.

This sequence belongs to the heat shock protein 90 family. In terms of assembly, homodimer.

The protein resides in the cytoplasm. Molecular chaperone. Has ATPase activity. This Mycolicibacterium vanbaalenii (strain DSM 7251 / JCM 13017 / BCRC 16820 / KCTC 9966 / NRRL B-24157 / PYR-1) (Mycobacterium vanbaalenii) protein is Chaperone protein HtpG.